The sequence spans 216 residues: Small ribosomal subunit protein uS3 (216 aa).

Residues 20–91 (LKEFFEKALV…SVEIVVEKVH (72 aa)) enclose the KH type-2 domain.

This sequence belongs to the universal ribosomal protein uS3 family.

This chain is Small ribosomal subunit protein uS3 (RPS3), found in Encephalitozoon cuniculi (strain GB-M1) (Microsporidian parasite).